A 293-amino-acid polypeptide reads, in one-letter code: MFISEKVQKALEENKPIVALESTVIAHGLPYPENLKVAQEFEDIVYENGCVPATIGILKGKVIVGLSKEQLIELVDDNPIKVGTREISYAIAMKKSAATTVSSTAKIASLAGIKVFATGGIGGVHRGEWDVSQDIIELSKTNIIVVSAGCKSILDIKKTLEFLETFQVLTVGYKTEYFPIFYNRLSKEKIYKVENADEIANIFNEKNKLKLESAILVANPIPEDYVLDNNEIEGYIKTIEKEIAEKDIHGKEVTPYMLKRLVELSNGKTLESNIVLLKNNVELACKIAQSLKK.

Catalysis depends on E21, which acts as the Proton donor. Substrate-binding residues include K81 and V101. D130 is a Mn(2+) binding site. Position 132–134 (132–134) interacts with substrate; that stretch reads SQD. Catalysis depends on K151, which acts as the Nucleophile.

This sequence belongs to the pseudouridine-5'-phosphate glycosidase family. Homotrimer. The cofactor is Mn(2+).

The catalysed reaction is D-ribose 5-phosphate + uracil = psi-UMP + H2O. Functionally, catalyzes the reversible cleavage of pseudouridine 5'-phosphate (PsiMP) to ribose 5-phosphate and uracil. Functions biologically in the cleavage direction, as part of a pseudouridine degradation pathway. The chain is Pseudouridine-5'-phosphate glycosidase from Thermosipho africanus (strain TCF52B).